Consider the following 181-residue polypeptide: Large ribosomal subunit protein uL5 (181 aa).

The protein belongs to the universal ribosomal protein uL5 family. As to quaternary structure, part of the 50S ribosomal subunit; part of the 5S rRNA/L5/L18/L25 subcomplex. Contacts the 5S rRNA and the P site tRNA. Forms a bridge to the 30S subunit in the 70S ribosome.

Its function is as follows. This is one of the proteins that bind and probably mediate the attachment of the 5S RNA into the large ribosomal subunit, where it forms part of the central protuberance. In the 70S ribosome it contacts protein S13 of the 30S subunit (bridge B1b), connecting the 2 subunits; this bridge is implicated in subunit movement. Contacts the P site tRNA; the 5S rRNA and some of its associated proteins might help stabilize positioning of ribosome-bound tRNAs. The polypeptide is Large ribosomal subunit protein uL5 (Aster yellows witches'-broom phytoplasma (strain AYWB)).